The sequence spans 227 residues: ATP synthase F(0) complex subunit a (227 aa).

A run of 6 helical transmembrane segments spans residues 12–32 (PYLM…LLFP), 69–89 (WALL…MGLL), 98–118 (QLSM…LIGL), 139–159 (IPIL…ALGV), 170–190 (LLIQ…PSIS), and 196–216 (ILLL…YVFV).

Belongs to the ATPase A chain family. As to quaternary structure, component of the ATP synthase complex composed at least of ATP5F1A/subunit alpha, ATP5F1B/subunit beta, ATP5MC1/subunit c (homooctomer), MT-ATP6/subunit a, MT-ATP8/subunit 8, ATP5ME/subunit e, ATP5MF/subunit f, ATP5MG/subunit g, ATP5MK/subunit k, ATP5MJ/subunit j, ATP5F1C/subunit gamma, ATP5F1D/subunit delta, ATP5F1E/subunit epsilon, ATP5PF/subunit F6, ATP5PB/subunit b, ATP5PD/subunit d, ATP5PO/subunit OSCP. ATP synthase complex consists of a soluble F(1) head domain (subunits alpha(3) and beta(3)) - the catalytic core - and a membrane F(0) domain - the membrane proton channel (subunits c, a, 8, e, f, g, k and j). These two domains are linked by a central stalk (subunits gamma, delta, and epsilon) rotating inside the F1 region and a stationary peripheral stalk (subunits F6, b, d, and OSCP). Interacts with DNAJC30; interaction is direct.

It localises to the mitochondrion inner membrane. It catalyses the reaction H(+)(in) = H(+)(out). Functionally, subunit a, of the mitochondrial membrane ATP synthase complex (F(1)F(0) ATP synthase or Complex V) that produces ATP from ADP in the presence of a proton gradient across the membrane which is generated by electron transport complexes of the respiratory chain. ATP synthase complex consist of a soluble F(1) head domain - the catalytic core - and a membrane F(1) domain - the membrane proton channel. These two domains are linked by a central stalk rotating inside the F(1) region and a stationary peripheral stalk. During catalysis, ATP synthesis in the catalytic domain of F(1) is coupled via a rotary mechanism of the central stalk subunits to proton translocation. With the subunit c (ATP5MC1), forms the proton-conducting channel in the F(0) domain, that contains two crucial half-channels (inlet and outlet) that facilitate proton movement from the mitochondrial intermembrane space (IMS) into the matrix. Protons are taken up via the inlet half-channel and released through the outlet half-channel, following a Grotthuss mechanism. The sequence is that of ATP synthase F(0) complex subunit a from Coturnix japonica (Japanese quail).